A 320-amino-acid polypeptide reads, in one-letter code: MAEVVAVDVGATWVRMAIVRGGVIEAIKRERNPGTEEGLERVLQGLAEGLGIDRGRVEKVGAASIGPLDLRRGYIVGSPNIKSHIVRLSTILKRLFPKSKVAIANDAVAAAWGEYLLGRLAGTPDLGYITMSTGVGGGFVVGGRLLLGSRGNAHEVGHIVVDMGWEGGRCGCGGTGHWEAIAGGRWIPRTSSVLARGWRGPETSLYRAALEGRVGSAREVFEAAAVGDDFALHVIDYIARASAAGIASVKAAYDVDAVIIGGSVYLNNRRMLRPLIERHLAAYAPFSSRIEVVDASFGDNEGVMGAYAIAYRNPEDLPIF.

This sequence belongs to the ROK (NagC/XylR) family. In terms of assembly, monomer. It depends on a divalent metal cation as a cofactor.

It catalyses the reaction D-glucose + ATP = D-glucose 6-phosphate + ADP + H(+). Functionally, catalyzes the phosphorylation of D-glucose to D-glucose 6-phosphate using ATP as the phosphate donor. ITP can also serve as an effective phosphoryl donor. According to Hansen et al., the enzyme has a broad hexose specificity, and in addition to glucose, which shows the highest catalytic efficiency, it can also phosphorylate fructose, mannose, glucosamine, N-acetylglucosamine, N-acetylmannosamine and 2-deoxyglucose. However, according to Sakuraba et al., the enzyme shows strict specificity for D-glucose. This is Glucokinase from Aeropyrum pernix (strain ATCC 700893 / DSM 11879 / JCM 9820 / NBRC 100138 / K1).